The primary structure comprises 310 residues: Ribose-phosphate pyrophosphokinase (310 aa).

ATP contacts are provided by residues 33-35 (DGE) and 92-93 (RQ). 2 residues coordinate Mg(2+): histidine 127 and aspartate 166. Lysine 189 is a catalytic residue. D-ribose 5-phosphate is bound by residues arginine 191, aspartate 215, and 219–223 (DTAGT).

The protein belongs to the ribose-phosphate pyrophosphokinase family. Class I subfamily. As to quaternary structure, homohexamer. Requires Mg(2+) as cofactor.

It is found in the cytoplasm. It catalyses the reaction D-ribose 5-phosphate + ATP = 5-phospho-alpha-D-ribose 1-diphosphate + AMP + H(+). The protein operates within metabolic intermediate biosynthesis; 5-phospho-alpha-D-ribose 1-diphosphate biosynthesis; 5-phospho-alpha-D-ribose 1-diphosphate from D-ribose 5-phosphate (route I): step 1/1. In terms of biological role, involved in the biosynthesis of the central metabolite phospho-alpha-D-ribosyl-1-pyrophosphate (PRPP) via the transfer of pyrophosphoryl group from ATP to 1-hydroxyl of ribose-5-phosphate (Rib-5-P). The chain is Ribose-phosphate pyrophosphokinase from Bordetella pertussis (strain Tohama I / ATCC BAA-589 / NCTC 13251).